Here is a 497-residue protein sequence, read N- to C-terminus: Arginine/ornithine antiporter ArcD2 (497 aa).

The next 13 membrane-spanning stretches (helical) occupy residues 8 to 28 (GISLFALLAIIISGAIGGGVF), 41 to 61 (GGVVISWLFIGFGILMLVLSF), 88 to 108 (FLSGWGYWISAWTGTIGFAVL), 127 to 147 (SLTILSVIIVSIISWILMLLV), 160 to 180 (IVMIAKLIPLVVFSITGIILF), 220 to 240 (IKGSLMVMVWVFVGIEGATMM), 255 to 275 (VIGLAVLLVIYVLLSLLPYGY), 297 to 317 (VGGWGGSLMAVGLMISLLGAW), 354 to 374 (LLITQLMIQIFIIITYFVANA), 378 to 398 (FIYMATAVIMICYALVGAYLF), 406 to 426 (SVKNILIGFFTFAFQALALYL), 429 to 449 (WQYVWLAMILYTIGFLLFIGA), and 462 to 482 (WLGMLVVTVLGVLAIVVLICG).

It belongs to the amino acid-polyamine-organocation (APC) superfamily. Basic amino acid/polyamine antiporter (APA) (TC 2.A.3.2) family.

It localises to the cell membrane. It catalyses the reaction L-ornithine(in) + L-arginine(out) = L-ornithine(out) + L-arginine(in). Catalyzes electroneutral exchange between L-arginine and L-ornithine. Can also efficiently translocate L-alanine. May function in vivo as a L-arginine/L-alanine exchanger in a pathway together with the arcT gene, which is found adjacent to the arcD2 gene in the ADI gene cluster. This Lactococcus lactis subsp. cremoris (strain MG1363) protein is Arginine/ornithine antiporter ArcD2.